The chain runs to 393 residues: MKNFRLSEKEVKTLAKRIPTPFLVASLDKVEENYQFMRRHLPRAGVFYAMKANPTPEILSLLAGLGSHFDVASAGEMEILHELGVDGSQMIYANPVKDARGLKAAADYNVRRFTFDDPSEIDKMAKAVPGADVLVRIAVRNNKALVDLNTKFGAPVEEALDLLKAAQDAGLHAMGICFHVGSQSLSTAAYEEALLVARRLFDEAEEMGMHLTDLDIGGGFPVPDAKGLNVDLAAMMEAINKQIDRLFPDTAVWTEPGRYMCGTAVNLVTSVIGTKTRGEQPWYILDEGIYGCFSGIMYDHWTYPLHCFGKGNKKPSTFGGPSCDGIDVLYRDFMAPELKIGDKVLVTEMGSYTSVSATRFNGFYLAPTIIFEDQPEYAARLTEDDDVKKKAAV.

K51 carries the N6-(pyridoxal phosphate)lysine modification. C323 serves as the catalytic Proton donor; shared with dimeric partner.

This sequence belongs to the Orn/Lys/Arg decarboxylase class-II family. In terms of assembly, homodimer. Pyridoxal 5'-phosphate is required as a cofactor.

It carries out the reaction L-lysine + H(+) = cadaverine + CO2. It catalyses the reaction L-ornithine + H(+) = putrescine + CO2. Its pathway is amine and polyamine biosynthesis; putrescine biosynthesis via L-ornithine pathway; putrescine from L-ornithine: step 1/1. Inhibited competitively by both alpha-difluoromethyllysine and alpha-difluoromethylornithine. Decarboxylates both L-lysine and L-ornithine with similar catalytic efficiency. This is Lysine/ornithine decarboxylase (ldc) from Selenomonas ruminantium.